We begin with the raw amino-acid sequence, 63 residues long: MARRCEVCNKGVSHGHNVSHAENKTKRTWSPNVQTVRAVVDGRVKRITVCTRCLRSGKVQRAI.

It belongs to the bacterial ribosomal protein bL28 family.

The protein is Large ribosomal subunit protein bL28 of Symbiobacterium thermophilum (strain DSM 24528 / JCM 14929 / IAM 14863 / T).